Here is a 293-residue protein sequence, read N- to C-terminus: Ribosomal protein L11 methyltransferase (293 aa).

Residues Thr145, Gly166, Asp188, and Asn230 each contribute to the S-adenosyl-L-methionine site.

This sequence belongs to the methyltransferase superfamily. PrmA family.

The protein resides in the cytoplasm. The catalysed reaction is L-lysyl-[protein] + 3 S-adenosyl-L-methionine = N(6),N(6),N(6)-trimethyl-L-lysyl-[protein] + 3 S-adenosyl-L-homocysteine + 3 H(+). Its function is as follows. Methylates ribosomal protein L11. In Actinobacillus pleuropneumoniae serotype 7 (strain AP76), this protein is Ribosomal protein L11 methyltransferase.